A 335-amino-acid polypeptide reads, in one-letter code: Hsp90 co-chaperone Cdc37-like 1 (335 aa).

Residues 1-11 (MEQPWPPPGPW) are compositionally biased toward pro residues. The segment at 1–42 (MEQPWPPPGPWSFPRTGGETEEESDLDVSPSSSHYSPVPDGG) is disordered. The interval 2-170 (EQPWPPPGPW…YEQKIRHFGM (169 aa)) is self-association. Residues 27-40 (DVSPSSSHYSPVPD) are compositionally biased toward low complexity. Ser32 and Ser88 each carry phosphoserine. The stretch at 84-120 (HNSESLDQEHAKAQTAVSELRQREEEWRQKEEALVQR) forms a coiled coil. Positions 147–276 (KTEEEDKSQS…SRVRLYAQSQ (130 aa)) are self-association and interaction with Hsp90. The tract at residues 266–335 (KSRVRLYAQS…EDDDRMMDTV (70 aa)) is interaction with Hsp70. The tract at residues 277–335 (SLQPVTVQNHVPHSGVGCIGSLESLPQNPDSLQCCTPAPLCSVDSVVHKEDDDRMMDTV) is required for interaction with STIP1.

It belongs to the CDC37 family. In terms of assembly, self-associates. Forms complexes with Hsp70 and Hsp90. Interacts with CDC37, FKBP4, PPID and STIP1.

It localises to the cytoplasm. Functionally, co-chaperone that binds to numerous proteins and promotes their interaction with Hsp70 and Hsp90. The chain is Hsp90 co-chaperone Cdc37-like 1 (Cdc37l1) from Mus musculus (Mouse).